A 189-amino-acid chain; its full sequence is GTPase HRas (189 aa).

M1 is modified (N-acetylmethionine). T2 bears the N-acetylthreonine; in GTPase HRas, N-terminally processed mark. Residue G10–S17 coordinates GTP. The short motif at Y32–Y40 is the Effector region element. Residues D57–Q61 and N116–D119 contribute to the GTP site. C118 bears the S-nitrosocysteine mark. A hypervariable region region spans residues H166–K185. S-palmitoyl cysteine attachment occurs at residues C181 and C184. C186 is modified (cysteine methyl ester). Residue C186 is the site of S-farnesyl cysteine attachment. A propeptide spans V187–S189 (removed in mature form).

It belongs to the small GTPase superfamily. Ras family. In terms of processing, palmitoylated by the ZDHHC9-GOLGA7 complex. A continuous cycle of de- and re-palmitoylation regulates rapid exchange between plasma membrane and Golgi.

It is found in the cell membrane. It localises to the golgi apparatus membrane. It carries out the reaction GTP + H2O = GDP + phosphate + H(+). Its activity is regulated as follows. Alternates between an inactive form bound to GDP and an active form bound to GTP. Activated by a guanine nucleotide-exchange factor (GEF) and inactivated by a GTPase-activating protein (GAP). In terms of biological role, ras proteins bind GDP/GTP and possess intrinsic GTPase activity. The sequence is that of GTPase HRas (HRAS) from Gallus gallus (Chicken).